The chain runs to 227 residues: Cytochrome c oxidase subunit 2 (227 aa).

Residues 1–14 (MAYPLQLGLQDATS) lie on the Mitochondrial intermembrane side of the membrane. Residues 15-45 (PIMEELTSFHDHTLMIVFLISSLVLYIISSM) traverse the membrane as a helical segment. Residues 46-59 (LTTKMTHTNTMDAQ) lie on the Mitochondrial matrix side of the membrane. A helical membrane pass occupies residues 60–87 (GVETIWTILPAAILVLIALPSLRILYMM). The Mitochondrial intermembrane portion of the chain corresponds to 88 to 227 (DEINNPALTV…HFENWSASMI (140 aa)). Residues His-161, Cys-196, Glu-198, Cys-200, His-204, and Met-207 each coordinate Cu cation. Glu-198 serves as a coordination point for Mg(2+).

The protein belongs to the cytochrome c oxidase subunit 2 family. Component of the cytochrome c oxidase (complex IV, CIV), a multisubunit enzyme composed of 14 subunits. The complex is composed of a catalytic core of 3 subunits MT-CO1, MT-CO2 and MT-CO3, encoded in the mitochondrial DNA, and 11 supernumerary subunits COX4I, COX5A, COX5B, COX6A, COX6B, COX6C, COX7A, COX7B, COX7C, COX8 and NDUFA4, which are encoded in the nuclear genome. The complex exists as a monomer or a dimer and forms supercomplexes (SCs) in the inner mitochondrial membrane with NADH-ubiquinone oxidoreductase (complex I, CI) and ubiquinol-cytochrome c oxidoreductase (cytochrome b-c1 complex, complex III, CIII), resulting in different assemblies (supercomplex SCI(1)III(2)IV(1) and megacomplex MCI(2)III(2)IV(2)). Found in a complex with TMEM177, COA6, COX18, COX20, SCO1 and SCO2. Interacts with TMEM177 in a COX20-dependent manner. Interacts with COX20. Interacts with COX16. The cofactor is Cu cation.

It localises to the mitochondrion inner membrane. The catalysed reaction is 4 Fe(II)-[cytochrome c] + O2 + 8 H(+)(in) = 4 Fe(III)-[cytochrome c] + 2 H2O + 4 H(+)(out). Functionally, component of the cytochrome c oxidase, the last enzyme in the mitochondrial electron transport chain which drives oxidative phosphorylation. The respiratory chain contains 3 multisubunit complexes succinate dehydrogenase (complex II, CII), ubiquinol-cytochrome c oxidoreductase (cytochrome b-c1 complex, complex III, CIII) and cytochrome c oxidase (complex IV, CIV), that cooperate to transfer electrons derived from NADH and succinate to molecular oxygen, creating an electrochemical gradient over the inner membrane that drives transmembrane transport and the ATP synthase. Cytochrome c oxidase is the component of the respiratory chain that catalyzes the reduction of oxygen to water. Electrons originating from reduced cytochrome c in the intermembrane space (IMS) are transferred via the dinuclear copper A center (CU(A)) of subunit 2 and heme A of subunit 1 to the active site in subunit 1, a binuclear center (BNC) formed by heme A3 and copper B (CU(B)). The BNC reduces molecular oxygen to 2 water molecules using 4 electrons from cytochrome c in the IMS and 4 protons from the mitochondrial matrix. This Acomys ignitus (Fiery spiny mouse) protein is Cytochrome c oxidase subunit 2 (MT-CO2).